A 144-amino-acid chain; its full sequence is L-fucose mutarotase (144 aa).

The active-site Proton donor is the His-22. Residues Asp-30, Arg-109, and Tyr-131 to Asn-133 contribute to the substrate site.

It belongs to the RbsD / FucU family. FucU mutarotase subfamily. Homodecamer.

The protein resides in the cytoplasm. It carries out the reaction alpha-L-fucose = beta-L-fucose. Its pathway is carbohydrate metabolism; L-fucose metabolism. In terms of biological role, involved in the anomeric conversion of L-fucose. This is L-fucose mutarotase from Haemophilus influenzae (strain 86-028NP).